A 151-amino-acid chain; its full sequence is D-aminoacyl-tRNA deacylase (151 aa).

The Gly-cisPro motif, important for rejection of L-amino acids signature appears at 142 to 143 (GP).

Belongs to the DTD family. In terms of assembly, homodimer.

It is found in the cytoplasm. The catalysed reaction is glycyl-tRNA(Ala) + H2O = tRNA(Ala) + glycine + H(+). It carries out the reaction a D-aminoacyl-tRNA + H2O = a tRNA + a D-alpha-amino acid + H(+). An aminoacyl-tRNA editing enzyme that deacylates mischarged D-aminoacyl-tRNAs. Also deacylates mischarged glycyl-tRNA(Ala), protecting cells against glycine mischarging by AlaRS. Acts via tRNA-based rather than protein-based catalysis; rejects L-amino acids rather than detecting D-amino acids in the active site. By recycling D-aminoacyl-tRNA to D-amino acids and free tRNA molecules, this enzyme counteracts the toxicity associated with the formation of D-aminoacyl-tRNA entities in vivo and helps enforce protein L-homochirality. In Psychrobacter cryohalolentis (strain ATCC BAA-1226 / DSM 17306 / VKM B-2378 / K5), this protein is D-aminoacyl-tRNA deacylase.